Consider the following 1745-residue polypeptide: ADAMTS-like protein 1 (1745 aa).

The N-terminal stretch at Met1 to Ser28 is a signal peptide. One can recognise a TSP type-1 1 domain in the interval Glu33–Pro82. 3 disulfides stabilise this stretch: Cys45–Cys76, Cys49–Cys81, and Cys60–Cys66. N-linked (GlcNAc...) asparagine glycosylation occurs at Asn251. O-linked (Fuc...) serine glycosylation is found at Ser310 and Ser391. TSP type-1 domains are found at residues Pro376–Pro424, Asp436–Tyr493, Glu522–Asn584, Glu607–Pro667, Cys703–Asp762, and Cys763–Ala825. O-linked (Fuc...) threonine glycosylation occurs at Thr451. 3 cysteine pairs are disulfide-bonded: Cys534–Cys578, Cys538–Cys583, and Cys549–Cys567. Disulfide bonds link Cys775-Cys819, Cys779-Cys824, Cys790-Cys807, and Cys874-Cys922. An Ig-like C2-type 1 domain is found at Pro836 to Gly938. Disordered regions lie at residues Glu966–Ala991 and Val1114–Arg1137. The segment covering Ser1115–Gly1126 has biased composition (low complexity). Ig-like C2-type domains are found at residues Pro1139 to Thr1241, Pro1261 to Leu1352, and Pro1378 to Val1468. 3 disulfides stabilise this stretch: Cys1177/Cys1225, Cys1283/Cys1336, and Cys1401/Cys1452. TSP type-1 domains follow at residues Cys1528–Val1591 and Cys1649–Glu1709. Positions Glu1709 to Ala1745 constitute a PLAC domain.

In terms of assembly, monomer. In terms of processing, glycosylated. O-fucosylated by POFUT2 on a serine or a threonine residue found within the consensus sequence C1-X(2)-(S/T)-C2-G of the TSP type-1 repeat domains where C1 and C2 are the first and second cysteine residue of the repeat, respectively. Fucosylated repeats can then be further glycosylated by the addition of a beta-1,3-glucose residue by the glucosyltransferase, B3GALTL. Fucosylation mediates the efficient secretion of ADAMTS family members. Can also be C-glycosylated with one or two mannose molecules on tryptophan residues within the consensus sequence W-X-X-W of the TPRs, and N-glycosylated. These other glycosylations can also facilitate secretion. Post-translationally, disulfide bonds are present.

It localises to the secreted. The protein localises to the extracellular space. Its subcellular location is the extracellular matrix. This is ADAMTS-like protein 1 (Adamtsl1) from Mus musculus (Mouse).